A 439-amino-acid chain; its full sequence is Lipid-A-disaccharide synthase (439 aa).

The tract at residues 1-35 (MKEIGNRESGIVDGQRNGASVGSDPTALPIPHSPL) is disordered.

It belongs to the LpxB family.

The catalysed reaction is a lipid X + a UDP-2-N,3-O-bis[(3R)-3-hydroxyacyl]-alpha-D-glucosamine = a lipid A disaccharide + UDP + H(+). Its pathway is bacterial outer membrane biogenesis; LPS lipid A biosynthesis. Its function is as follows. Condensation of UDP-2,3-diacylglucosamine and 2,3-diacylglucosamine-1-phosphate to form lipid A disaccharide, a precursor of lipid A, a phosphorylated glycolipid that anchors the lipopolysaccharide to the outer membrane of the cell. This chain is Lipid-A-disaccharide synthase, found in Xanthomonas euvesicatoria pv. vesicatoria (strain 85-10) (Xanthomonas campestris pv. vesicatoria).